Reading from the N-terminus, the 317-residue chain is tRNA dimethylallyltransferase (317 aa).

18–25 (GPTATGKT) provides a ligand contact to ATP. A substrate-binding site is contributed by 20 to 25 (TATGKT). Interaction with substrate tRNA stretches follow at residues 43–46 (DSAL), 167–171 (QRIQR), and 281–288 (KRQITWLR).

This sequence belongs to the IPP transferase family. Monomer. Requires Mg(2+) as cofactor.

The catalysed reaction is adenosine(37) in tRNA + dimethylallyl diphosphate = N(6)-dimethylallyladenosine(37) in tRNA + diphosphate. Its function is as follows. Catalyzes the transfer of a dimethylallyl group onto the adenine at position 37 in tRNAs that read codons beginning with uridine, leading to the formation of N6-(dimethylallyl)adenosine (i(6)A). The protein is tRNA dimethylallyltransferase of Alkalilimnicola ehrlichii (strain ATCC BAA-1101 / DSM 17681 / MLHE-1).